Consider the following 292-residue polypeptide: 4-hydroxybenzoate solanesyltransferase (292 aa).

Transmembrane regions (helical) follow at residues 28-48 (LILM…LPPL), 49-69 (PLLG…CVVN), 97-117 (VGIG…FYLT), 118-138 (PLSF…PGAK), 140-160 (VFPV…LISW), 172-192 (WVLW…YAMA), 217-237 (VGIF…ILML), 239-259 (PLYW…YIQL), and 272-292 (IFGQ…LGWL).

Belongs to the UbiA prenyltransferase family. Mg(2+) is required as a cofactor.

Its subcellular location is the cell inner membrane. It carries out the reaction all-trans-nonaprenyl diphosphate + 4-hydroxybenzoate = 4-hydroxy-3-(all-trans-nonaprenyl)benzoate + diphosphate. In terms of biological role, catalyzes the prenylation of para-hydroxybenzoate (PHB) with an all-trans polyprenyl group. Mediates the second step in the final reaction sequence of plastoquinone-9 (PQ-9) biosynthesis, which is the condensation of the polyisoprenoid side chain with PHB, generating the first membrane-bound Q intermediate 4-hydroxy-3-solanesylbenzoate. The protein is 4-hydroxybenzoate solanesyltransferase of Synechocystis sp. (strain ATCC 27184 / PCC 6803 / Kazusa).